A 377-amino-acid chain; its full sequence is Nitric oxide reductase FlRd-NAD(+) reductase (377 aa).

This sequence belongs to the FAD-dependent oxidoreductase family. FAD is required as a cofactor.

It localises to the cytoplasm. The enzyme catalyses 2 reduced [nitric oxide reductase rubredoxin domain] + NAD(+) + H(+) = 2 oxidized [nitric oxide reductase rubredoxin domain] + NADH. It participates in nitrogen metabolism; nitric oxide reduction. Its function is as follows. One of at least two accessory proteins for anaerobic nitric oxide (NO) reductase. Reduces the rubredoxin moiety of NO reductase. This chain is Nitric oxide reductase FlRd-NAD(+) reductase, found in Shigella dysenteriae serotype 1 (strain Sd197).